Consider the following 422-residue polypeptide: Serine--tRNA ligase (422 aa).

230–232 (TAE) contributes to the L-serine binding site. 261–263 (RAE) is a binding site for ATP. Position 284 (glutamate 284) interacts with L-serine. Position 348–351 (348–351 (EISS)) interacts with ATP. Serine 383 contributes to the L-serine binding site.

The protein belongs to the class-II aminoacyl-tRNA synthetase family. Type-1 seryl-tRNA synthetase subfamily. Homodimer. The tRNA molecule binds across the dimer.

Its subcellular location is the cytoplasm. It catalyses the reaction tRNA(Ser) + L-serine + ATP = L-seryl-tRNA(Ser) + AMP + diphosphate + H(+). The catalysed reaction is tRNA(Sec) + L-serine + ATP = L-seryl-tRNA(Sec) + AMP + diphosphate + H(+). It functions in the pathway aminoacyl-tRNA biosynthesis; selenocysteinyl-tRNA(Sec) biosynthesis; L-seryl-tRNA(Sec) from L-serine and tRNA(Sec): step 1/1. Its function is as follows. Catalyzes the attachment of serine to tRNA(Ser). Is also able to aminoacylate tRNA(Sec) with serine, to form the misacylated tRNA L-seryl-tRNA(Sec), which will be further converted into selenocysteinyl-tRNA(Sec). This chain is Serine--tRNA ligase, found in Pelotomaculum thermopropionicum (strain DSM 13744 / JCM 10971 / SI).